The primary structure comprises 136 residues: Cytochrome b5 (136 aa).

The Cytochrome b5 heme-binding domain occupies 5–81; the sequence is TKVFTLAEVS…LDEYYVGDID (77 aa). Residues histidine 40 and histidine 64 each contribute to the heme site. Residues 107 to 127 form a helical membrane-spanning segment; the sequence is FVVKLLQFLVPLIILGVAFGI.

This sequence belongs to the cytochrome b5 family. Is highly expressed in developing seeds, moderately expressed in flowers, and is expressed at low levels in the leaf.

It is found in the endoplasmic reticulum membrane. Its subcellular location is the microsome membrane. Its function is as follows. Cytochrome b5 is a membrane bound hemoprotein which function as an electron carrier for several membrane bound oxygenases. May play a key role in the modification by desaturation of fatty acids in the endoplasmic reticulum, which in the developing seed is utilized for membrane synthesis and in the developmentally regulated production of large amounts of storage lipids. Is involved in the reduction of cytochrome P-450 and may therefore be involved in flavonoid biosynthesis in the petals. The sequence is that of Cytochrome b5 from Nicotiana tabacum (Common tobacco).